The sequence spans 295 residues: Shikimate dehydrogenase (NADP(+)) (295 aa).

Residues 24 to 26 (SRS) and threonine 71 each bind shikimate. Lysine 75 serves as the catalytic Proton acceptor. Residue glutamate 87 participates in NADP(+) binding. Asparagine 96 and aspartate 111 together coordinate shikimate. NADP(+) contacts are provided by residues 136–140 (GAGGA), 160–165 (NRTASR), and methionine 233. Tyrosine 235 contacts shikimate. Glycine 256 provides a ligand contact to NADP(+).

This sequence belongs to the shikimate dehydrogenase family. Homodimer.

It carries out the reaction shikimate + NADP(+) = 3-dehydroshikimate + NADPH + H(+). It participates in metabolic intermediate biosynthesis; chorismate biosynthesis; chorismate from D-erythrose 4-phosphate and phosphoenolpyruvate: step 4/7. Involved in the biosynthesis of the chorismate, which leads to the biosynthesis of aromatic amino acids. Catalyzes the reversible NADPH linked reduction of 3-dehydroshikimate (DHSA) to yield shikimate (SA). The chain is Shikimate dehydrogenase (NADP(+)) from Cupriavidus taiwanensis (strain DSM 17343 / BCRC 17206 / CCUG 44338 / CIP 107171 / LMG 19424 / R1) (Ralstonia taiwanensis (strain LMG 19424)).